We begin with the raw amino-acid sequence, 175 residues long: RNA pyrophosphohydrolase (175 aa).

The Nudix hydrolase domain maps to 6–149 (GYRPNVGIVI…KRDVYRRVMK (144 aa)). Residues 38–59 (GGINPGETPEQAMYRELFEEVG) carry the Nudix box motif.

Belongs to the Nudix hydrolase family. RppH subfamily. Requires a divalent metal cation as cofactor.

Functionally, accelerates the degradation of transcripts by removing pyrophosphate from the 5'-end of triphosphorylated RNA, leading to a more labile monophosphorylated state that can stimulate subsequent ribonuclease cleavage. In Yersinia enterocolitica serotype O:8 / biotype 1B (strain NCTC 13174 / 8081), this protein is RNA pyrophosphohydrolase.